The following is a 105-amino-acid chain: uncharacterized protein (105 aa).

To C.jejuni CJ1463.

This is an uncharacterized protein from Helicobacter pylori (strain ATCC 700392 / 26695) (Campylobacter pylori).